Consider the following 699-residue polypeptide: SPS-sensor serine protease component SSY5 (699 aa).

Disordered regions lie at residues 1 to 113 (MVRF…LQGF) and 128 to 158 (PVKE…ENAR). A propeptide spanning residues 1–381 (MVRFFGLNKK…YCVKDYIKKA (381 aa)) is cleaved from the precursor. Residues 24 to 38 (NEQNAAETSSSNVSG) are compositionally biased toward polar residues. A compositionally biased stretch (basic and acidic residues) spans 39–51 (NEERIDPNSHDTN). Residues 61–78 (STTFGSSIQSSSIFSRGR) are compositionally biased toward low complexity. Positions 83–93 (TGASSSMATSE) are enriched in polar residues. 2 stretches are compositionally biased toward low complexity: residues 97-109 (HSSG…NSKN) and 144-154 (SSSTSSTLATS). The tract at residues 459-699 (FAITCAHVVL…QWDIDPQLDG (241 aa)) is serine protease. Catalysis depends on charge relay system residues histidine 465, aspartate 545, and serine 640.

It belongs to the peptidase S64 family. Component of the plasma membrane SPS (SSY1-PTR3-SSY5) amino acid sensor complex. The propeptide is autoproteolytically cleaved from the catalytic domain but remains associated, forming an inactive protease complex. This processing occurs even in the absence of signaling.

The protein localises to the cell membrane. Functionally, protease component of the SPS-sensor system, which regulates the expression of several amino acid-metabolizing enzymes and amino acid- and peptide-permeases in response to extracellular amino acid levels by controlling the activity of two transcription factors, STP1 and STP2. Catalyzes the activation of these transcription factors, which are synthesized as latent cytoplasmic precursors, by proteolytic removal of an N-terminal inhibitory domain containing cytoplasmic retention motifs. SSY5 binds as an inactive protease complex to STP1. In response to extracellular amino acids and dependent on the other SPS-sensor components, the inhibitory propeptide is induced to dissociate, and thereby enables the catalytic domain to process STP1. This chain is SPS-sensor serine protease component SSY5 (SSY5), found in Saccharomyces cerevisiae (strain ATCC 204508 / S288c) (Baker's yeast).